The chain runs to 106 residues: Phosphoribosyl-ATP pyrophosphatase (106 aa).

It belongs to the PRA-PH family.

It localises to the cytoplasm. It carries out the reaction 1-(5-phospho-beta-D-ribosyl)-ATP + H2O = 1-(5-phospho-beta-D-ribosyl)-5'-AMP + diphosphate + H(+). It functions in the pathway amino-acid biosynthesis; L-histidine biosynthesis; L-histidine from 5-phospho-alpha-D-ribose 1-diphosphate: step 2/9. The chain is Phosphoribosyl-ATP pyrophosphatase from Rhizorhabdus wittichii (strain DSM 6014 / CCUG 31198 / JCM 15750 / NBRC 105917 / EY 4224 / RW1) (Sphingomonas wittichii).